The sequence spans 347 residues: GMP reductase (347 aa).

108-131 (DDFTKTRQILAMSTALRFICVDVA) lines the NADP(+) pocket. Positions 181 and 183 each coordinate K(+). Residue cysteine 186 is the Thioimidate intermediate of the active site. 216–239 (IVGDGGCTCPGDVAKAFGGGADFV) contributes to the NADP(+) binding site.

This sequence belongs to the IMPDH/GMPR family. GuaC type 1 subfamily. As to quaternary structure, homotetramer.

The enzyme catalyses IMP + NH4(+) + NADP(+) = GMP + NADPH + 2 H(+). Functionally, catalyzes the irreversible NADPH-dependent deamination of GMP to IMP. It functions in the conversion of nucleobase, nucleoside and nucleotide derivatives of G to A nucleotides, and in maintaining the intracellular balance of A and G nucleotides. This Aeromonas salmonicida (strain A449) protein is GMP reductase.